The chain runs to 472 residues: MAPFSRPHHPMIRTRFAPSPTGYLHIGGARTALFSWAFARHHGGQFVLRIEDTDIARSTPEAVQAILDGMAWLDLNHDEGPFYQTQRLYRYKEVIEQMLASGDAYHCYCSTEELDEMREAQRARGEKPRYDGRWRPEPGKTLPVPPSGVQPVVRFRNPTDGTVAWKDLVKGTIEFSNAELDDLIIARADGTPTYNFCVVVDDWDMRITHVIRGDDHVNNTPRQINILKALGATVPEYAHLSMILGDDGTKLSKRHGAVSVMQYFEEGYLPEAVINYLARLGWSHGDAELFDREQFVEWFDLDHITPSAAQFNTEKLRWLNQQYIKAADDTRLAGLARPFLIRNGATLDDGPDLAAVCALVKERAATIEALADAATLFYRVLHPTPELLAQHVTAEVRPALADLATRLETLEWERGAISAAFKETLAAHGLKMPKLAMPVRVLVTGEPQTPAIDATLELLGREKVLDRLRAAL.

A 'HIGH' region motif is present at residues proline 18–glycine 28. Residues arginine 122–proline 138 are compositionally biased toward basic and acidic residues. The interval arginine 122 to glutamine 150 is disordered. Positions lysine 250–arginine 254 match the 'KMSKS' region motif. Residue lysine 253 participates in ATP binding.

It belongs to the class-I aminoacyl-tRNA synthetase family. Glutamate--tRNA ligase type 1 subfamily. In terms of assembly, monomer.

It is found in the cytoplasm. The catalysed reaction is tRNA(Glu) + L-glutamate + ATP = L-glutamyl-tRNA(Glu) + AMP + diphosphate. Functionally, catalyzes the attachment of glutamate to tRNA(Glu) in a two-step reaction: glutamate is first activated by ATP to form Glu-AMP and then transferred to the acceptor end of tRNA(Glu). This is Glutamate--tRNA ligase from Thiobacillus denitrificans (strain ATCC 25259 / T1).